Reading from the N-terminus, the 316-residue chain is Beta-ketoacyl-[acyl-carrier-protein] synthase III 1 (316 aa).

Active-site residues include Cys-112 and His-243. Residues 244 to 248 (QANYR) are ACP-binding. The active site involves Asn-273.

This sequence belongs to the thiolase-like superfamily. FabH family. Homodimer.

The protein localises to the cytoplasm. It carries out the reaction malonyl-[ACP] + acetyl-CoA + H(+) = 3-oxobutanoyl-[ACP] + CO2 + CoA. The protein operates within lipid metabolism; fatty acid biosynthesis. Catalyzes the condensation reaction of fatty acid synthesis by the addition to an acyl acceptor of two carbons from malonyl-ACP. Catalyzes the first condensation reaction which initiates fatty acid synthesis and may therefore play a role in governing the total rate of fatty acid production. Possesses both acetoacetyl-ACP synthase and acetyl transacylase activities. Its substrate specificity determines the biosynthesis of branched-chain and/or straight-chain of fatty acids. In Vibrio parahaemolyticus serotype O3:K6 (strain RIMD 2210633), this protein is Beta-ketoacyl-[acyl-carrier-protein] synthase III 1.